We begin with the raw amino-acid sequence, 198 residues long: COMM domain-containing protein 9 (198 aa).

Ala2 bears the N-acetylalanine mark. Residues 122-196 (RLVDLDWRVD…RIRDQLSAVA (75 aa)) enclose the COMM domain.

This sequence belongs to the COMM domain-containing protein 9 family. In terms of assembly, component of the commander complex consisting of the CCC subcomplex and the retriever subcomplex. Component of the CCC (COMMD/CCDC22/CCDC93) subcomplex consisting of COMMD1, COMMD2, COMMD3, COMMD4, COMMD5, COMMD6, COMMD7, COMMD8, COMMD9, COMMD10, CCDC22 and CCDC93; within the complex forms a heterodimer with COMMD7. Interacts with RELB and NFKB1/p105. Interacts with CCDC22, CCDC93, SCNN1B, CUL1. As to expression, ubiquitous.

It localises to the nucleus. The protein resides in the cytoplasmic vesicle. Its function is as follows. Scaffold protein in the commander complex that is essential for endosomal recycling of transmembrane cargos; the commander complex is composed of the CCC subcomplex and the retriever subcomplex. May modulate activity of cullin-RING E3 ubiquitin ligase (CRL) complexes. May down-regulate activation of NF-kappa-B. Modulates Na(+) transport in epithelial cells by regulation of apical cell surface expression of amiloride-sensitive sodium channel (ENaC) subunits. In Homo sapiens (Human), this protein is COMM domain-containing protein 9 (COMMD9).